We begin with the raw amino-acid sequence, 121 residues long: Large ribosomal subunit protein uL18 (121 aa).

This sequence belongs to the universal ribosomal protein uL18 family. Part of the 50S ribosomal subunit; part of the 5S rRNA/L5/L18/L25 subcomplex. Contacts the 5S and 23S rRNAs.

Functionally, this is one of the proteins that bind and probably mediate the attachment of the 5S RNA into the large ribosomal subunit, where it forms part of the central protuberance. This is Large ribosomal subunit protein uL18 from Albidiferax ferrireducens (strain ATCC BAA-621 / DSM 15236 / T118) (Rhodoferax ferrireducens).